A 288-amino-acid chain; its full sequence is Ice-binding protein (288 aa).

The signal sequence occupies residues 1–22 (MFSTTLINTFSLGLLAVVSVVA). 2 short sequence motifs (ice-binding site motif (T-A/G-X-T/N)) span residues 75–78 (TAGN) and 154–157 (TAFN). A glycan (N-linked (GlcNAc...) asparagine) is linked at Asn-194. 2 consecutive short sequence motifs (ice-binding site motif (T-A/G-X-T/N)) follow at residues 196 to 199 (TGVT) and 265 to 268 (TGAT).

This sequence belongs to the ice-binding protein family.

Its subcellular location is the secreted. Functionally, binds ice crystals and most probably inhibits their growth in order to prevent cell damage from extracellular ice. The protein is Ice-binding protein of Lentinula edodes (Shiitake mushroom).